We begin with the raw amino-acid sequence, 211 residues long: MTSPMQRTRVKICGLTREEDIDAAVAAGADALGFVLWPGSSRAIDEARLARLAARVPAFVTRVGLFVDQADDEIRRYARHLDLVQLHGNESPDDCARLDTPWIKALRMRDGIDLHAEMSRYDAARGLLLDAYRPGVPGGTGETFDWSRIPANLAKPVILAGGLTADNVAEAIHRVRPYAVDVSGGVEAAKGLKDPARIRAFLSQVSHTQAP.

The protein belongs to the TrpF family.

It catalyses the reaction N-(5-phospho-beta-D-ribosyl)anthranilate = 1-(2-carboxyphenylamino)-1-deoxy-D-ribulose 5-phosphate. It functions in the pathway amino-acid biosynthesis; L-tryptophan biosynthesis; L-tryptophan from chorismate: step 3/5. This is N-(5'-phosphoribosyl)anthranilate isomerase from Chromohalobacter salexigens (strain ATCC BAA-138 / DSM 3043 / CIP 106854 / NCIMB 13768 / 1H11).